Reading from the N-terminus, the 245-residue chain is Eukaryotic translation initiation factor 6-2 (245 aa).

Belongs to the eIF-6 family. As to quaternary structure, monomer. Associates with the 60S ribosomal subunit.

The protein localises to the cytoplasm. The protein resides in the nucleus. It localises to the nucleolus. Functionally, binds to the 60S ribosomal subunit and prevents its association with the 40S ribosomal subunit to form the 80S initiation complex in the cytoplasm. May also be involved in ribosome biogenesis. The protein is Eukaryotic translation initiation factor 6-2 of Arabidopsis thaliana (Mouse-ear cress).